Here is a 432-residue protein sequence, read N- to C-terminus: Glutamyl-tRNA reductase (432 aa).

Residues 49–52 (TCNR), S101, 106–108 (EPQ), and Q112 each bind substrate. Catalysis depends on C50, which acts as the Nucleophile. 181 to 186 (GAGETI) is a binding site for NADP(+). The tract at residues 408–432 (PEKPGYRHPPVATPIVRTDDANPAP) is disordered.

This sequence belongs to the glutamyl-tRNA reductase family. Homodimer.

The catalysed reaction is (S)-4-amino-5-oxopentanoate + tRNA(Glu) + NADP(+) = L-glutamyl-tRNA(Glu) + NADPH + H(+). It functions in the pathway porphyrin-containing compound metabolism; protoporphyrin-IX biosynthesis; 5-aminolevulinate from L-glutamyl-tRNA(Glu): step 1/2. Functionally, catalyzes the NADPH-dependent reduction of glutamyl-tRNA(Glu) to glutamate 1-semialdehyde (GSA). The protein is Glutamyl-tRNA reductase of Xanthomonas campestris pv. campestris (strain B100).